Consider the following 148-residue polypeptide: Small ribosomal subunit protein bS6 (148 aa).

Positions 96–148 are disordered; sequence HEEGQSAMLTRRDDRRERDGDDRPRRREGGFDRGDRGDRSPRRPRDNEAGEGA.

This sequence belongs to the bacterial ribosomal protein bS6 family.

Its function is as follows. Binds together with bS18 to 16S ribosomal RNA. This chain is Small ribosomal subunit protein bS6, found in Brucella suis (strain ATCC 23445 / NCTC 10510).